Consider the following 249-residue polypeptide: Phosphoribosylaminoimidazole-succinocarboxamide synthase (249 aa).

It belongs to the SAICAR synthetase family.

The catalysed reaction is 5-amino-1-(5-phospho-D-ribosyl)imidazole-4-carboxylate + L-aspartate + ATP = (2S)-2-[5-amino-1-(5-phospho-beta-D-ribosyl)imidazole-4-carboxamido]succinate + ADP + phosphate + 2 H(+). It functions in the pathway purine metabolism; IMP biosynthesis via de novo pathway; 5-amino-1-(5-phospho-D-ribosyl)imidazole-4-carboxamide from 5-amino-1-(5-phospho-D-ribosyl)imidazole-4-carboxylate: step 1/2. The polypeptide is Phosphoribosylaminoimidazole-succinocarboxamide synthase (Chloroflexus aurantiacus (strain ATCC 29366 / DSM 635 / J-10-fl)).